The sequence spans 393 residues: Pre-mRNA-splicing regulator WTAP (393 aa).

Positions 242–393 (QIQISGNRTP…SSVNVQGSVL (152 aa)) are disordered. The segment covering 254-267 (EPKDEGETSGKDCG) has biased composition (basic and acidic residues). 2 stretches are compositionally biased toward polar residues: residues 272–286 (GPSN…THSS) and 321–353 (DGSS…SNDT). Residues 354-365 (DSNHDSQEEKPV) show a composition bias toward basic and acidic residues. The span at 369 to 393 (GNRTVSSRHLQNGLDSSVNVQGSVL) shows a compositional bias: polar residues.

Belongs to the fl(2)d family. Component of the WMM complex, a N6-methyltransferase complex composed of a catalytic subcomplex, named MAC, and of an associated subcomplex, named MACOM. Component of the MACOM subcomplex.

It is found in the nucleus speckle. The protein resides in the nucleus. It localises to the nucleoplasm. Associated component of the WMM complex, a complex that mediates N6-methyladenosine (m6A) methylation of RNAs, a modification that plays a role in the efficiency of mRNA splicing and RNA processing. This Xenopus laevis (African clawed frog) protein is Pre-mRNA-splicing regulator WTAP.